A 334-amino-acid polypeptide reads, in one-letter code: Transmembrane protein 41 homolog (334 aa).

Residue Asn43 is glycosylated (N-linked (GlcNAc...) asparagine). The tract at residues 47–79 (KNKNNNIDNKKNSNNNNNNNNNNNNKNSISNNN) is disordered. An N-linked (GlcNAc...) asparagine glycan is attached at Asn83. 6 helical membrane-spanning segments follow: residues 97–117 (LPLW…VFLF), 156–176 (FIVI…SIPG), 192–214 (VGFP…ISYY), 246–266 (IVFL…ASPL), 269–289 (VPIH…TFLA), and 305–325 (IFDL…ILPT).

It belongs to the TMEM41 family.

The protein resides in the membrane. The sequence is that of Transmembrane protein 41 homolog from Dictyostelium discoideum (Social amoeba).